The sequence spans 332 residues: Arabinogalactan endo-beta-1,4-galactanase (332 aa).

N111 carries N-linked (GlcNAc...) asparagine glycosylation. E135 serves as the catalytic Proton donor. E245 functions as the Nucleophile in the catalytic mechanism.

This sequence belongs to the glycosyl hydrolase 53 family.

The catalysed reaction is The enzyme specifically hydrolyzes (1-&gt;4)-beta-D-galactosidic linkages in type I arabinogalactans.. In Humicola insolens (Soft-rot fungus), this protein is Arabinogalactan endo-beta-1,4-galactanase.